The sequence spans 196 residues: Corticoliberin (196 aa).

A signal peptide spans 1-24 (MRLPLLLSAGVLLVVSLPCPPCRA). Residues 25-153 (LLSRGPIPGA…RQETPERERR (129 aa)) constitute a propeptide that is removed on maturation. The tract at residues 122 to 158 (PRRQLDSPAGPAERGEENALGSRQETPERERRSEEPP) is disordered. Over residues 146 to 156 (ETPERERRSEE) the composition is skewed to basic and acidic residues. The residue at position 194 (I194) is an Isoleucine amide.

Belongs to the sauvagine/corticotropin-releasing factor/urotensin I family. Interacts (via C-terminus) with CRFR1 (via N-terminal extracellular domain). As to expression, produced by the hypothalamus.

Its subcellular location is the secreted. In terms of biological role, hormone regulating the release of corticotropin from pituitary gland. Induces NLRP6 in intestinal epithelial cells, hence may influence gut microbiota profile. This is Corticoliberin (CRH) from Canis lupus familiaris (Dog).